Here is an 852-residue protein sequence, read N- to C-terminus: DNA repair protein rhp54 (852 aa).

2 short sequence motifs (nuclear localization signal) span residues lysine 35–leucine 51 and lysine 178–lysine 181. Positions asparagine 187 to serine 205 are enriched in basic and acidic residues. Residues asparagine 187–serine 208 form a disordered region. Residues glycine 281–glycine 459 form the Helicase ATP-binding domain. ATP is bound at residue aspartate 294–threonine 301. Residues aspartate 410 to histidine 413 carry the DEGH box motif. A Helicase C-terminal domain is found at valine 614–glutamate 767.

The protein belongs to the SNF2/RAD54 helicase family. In terms of assembly, homohexamer. Interacts with rhp51.

The protein resides in the nucleus. The enzyme catalyses ATP + H2O = ADP + phosphate + H(+). Functionally, plays an essential role in homologous recombination (HR) which is a major pathway for repairing DNA double-strand breaks (DSBs), single-stranded DNA (ssDNA) gaps, and stalled or collapsed replication forks. Acts as a molecular motor during the homology search and guides RAD51 ssDNA along a donor dsDNA thereby changing the homology search from the diffusion-based mechanism to a motor-guided mechanism. Plays also an essential role in RAD51-mediated synaptic complex formation which consists of three strands encased in a protein filament formed once homology is recognized. Once DNA strand exchange occured, dissociates RAD51 from nucleoprotein filaments formed on dsDNA. The protein is DNA repair protein rhp54 (rhp54) of Schizosaccharomyces pombe (strain 972 / ATCC 24843) (Fission yeast).